The following is a 238-amino-acid chain: ATP-dependent dethiobiotin synthetase BioD (238 aa).

12–17 lines the ATP pocket; the sequence is EVGKTV. Threonine 16 is a Mg(2+) binding site. Residue lysine 37 is part of the active site. Threonine 41 serves as a coordination point for substrate. ATP is bound by residues aspartate 50, 109–112, 170–171, and 200–202; these read EGAG, GS, and PAG. The Mg(2+) site is built by aspartate 50 and glutamate 109.

Belongs to the dethiobiotin synthetase family. As to quaternary structure, homodimer. Requires Mg(2+) as cofactor.

It is found in the cytoplasm. It carries out the reaction (7R,8S)-7,8-diammoniononanoate + CO2 + ATP = (4R,5S)-dethiobiotin + ADP + phosphate + 3 H(+). It participates in cofactor biosynthesis; biotin biosynthesis; biotin from 7,8-diaminononanoate: step 1/2. In terms of biological role, catalyzes a mechanistically unusual reaction, the ATP-dependent insertion of CO2 between the N7 and N8 nitrogen atoms of 7,8-diaminopelargonic acid (DAPA, also called 7,8-diammoniononanoate) to form a ureido ring. The protein is ATP-dependent dethiobiotin synthetase BioD of Parafrankia sp. (strain EAN1pec).